The sequence spans 477 residues: Probable cytosolic Fe-S cluster assembly factor GL21135 (477 aa).

Residues Cys-23, Cys-69, Cys-72, Cys-75, Cys-188, Cys-244, Cys-396, and Cys-400 each coordinate [4Fe-4S] cluster.

Belongs to the NARF family.

Functionally, component of the cytosolic iron-sulfur (Fe/S) protein assembly machinery. Required for maturation of extramitochondrial Fe/S proteins. This is Probable cytosolic Fe-S cluster assembly factor GL21135 from Drosophila persimilis (Fruit fly).